The primary structure comprises 517 residues: Cytochrome P450 CYP72A616 (517 aa).

A helical membrane pass occupies residues 5–25 (VLGALAALLAAAAAWVMRAAA). C465 is a heme binding site.

It belongs to the cytochrome P450 family. Mainly expressed in leaves and, at low levels, in roots, fruits and stems.

The protein resides in the membrane. Its pathway is steroid metabolism; cholesterol metabolism. Functionally, involved in the biosynthesis of spiroketal steroid and saponin natural products from cholesterol such as diosgenin and analogs (e.g. furostanol and spirostanol), plant defense compounds used as main precursors for the industrial production of steroid hormones. During the 5,6-spiroketalization of cholesterol, may catalyze the 27-monohydroxylation of furostanol-type steroid to an intermediate product that undergoes a stereospecific formation of the terminal heterocycle to yield diosgenin. This Paris polyphylla (Daiswa polyphylla) protein is Cytochrome P450 CYP72A616.